Consider the following 356-residue polypeptide: MRFDLERPSQNASSHRVAVLLINLGTPDAPTPRAVRRYLAQFLSDPRVVEIPALLWQIILRLLILPFRGVASAKKYAAVWMPEGSPLRVNTEKQVEGLRHLLQLNDYTVLVDYAMRYGTPGIPAMLNQLKLAGAERVLLMPMYPQYSSSTTATAFDDAFSALKRMRNQPEIRTVRQYADHPAYIAALAAQVHNYWHQHGRPDFAAGDKLVLSFHGVPKRTLDLGDPYHEQCQQTGALLMQALELTQVECRITFQSRFGKAEWLQPYTAPTLKELGAAGVRRADVFCPGFTADCLETIEEIGMEVRDEFLHAGGKDFHRIPCLNASQAWIAALGEIVAQNLQGWPVQALPVPHTTGA.

2 residues coordinate Fe cation: His-214 and Glu-295.

The protein belongs to the ferrochelatase family.

The protein localises to the cytoplasm. It catalyses the reaction heme b + 2 H(+) = protoporphyrin IX + Fe(2+). It functions in the pathway porphyrin-containing compound metabolism; protoheme biosynthesis; protoheme from protoporphyrin-IX: step 1/1. Functionally, catalyzes the ferrous insertion into protoporphyrin IX. The chain is Ferrochelatase from Paraburkholderia phytofirmans (strain DSM 17436 / LMG 22146 / PsJN) (Burkholderia phytofirmans).